The sequence spans 256 residues: MTAMSLATLETRLDHRFGDKALLEQALTHRSHGARHNERLEFLGDSVLNFVVAAMLFERYGKLDEGDLSRLRANLVKQASLADIAQRLDLSQYLRLGEGELKSGGFRRPSILADTVEALFGAVFLDAGFEAARRVIVRQYQPVMAHVDPKTLGKDAKTLLQEFLQGRKLALPQYTVVATHGAAHSQQFEVECAIPALEIKIVAPGASRRAAEQSAAKVALEAAQAVLPAARAARKSGKARKTAQLSLPVAVAQEVK.

Positions 6-128 (LATLETRLDH…LFGAVFLDAG (123 aa)) constitute an RNase III domain. Glu-41 is a binding site for Mg(2+). Residue Asp-45 is part of the active site. Residues Asp-114 and Glu-117 each coordinate Mg(2+). The active site involves Glu-117. One can recognise a DRBM domain in the interval 155–225 (DAKTLLQEFL…AKVALEAAQA (71 aa)).

Belongs to the ribonuclease III family. Homodimer. Requires Mg(2+) as cofactor.

It localises to the cytoplasm. The catalysed reaction is Endonucleolytic cleavage to 5'-phosphomonoester.. Its function is as follows. Digests double-stranded RNA. Involved in the processing of primary rRNA transcript to yield the immediate precursors to the large and small rRNAs (23S and 16S). Processes some mRNAs, and tRNAs when they are encoded in the rRNA operon. Processes pre-crRNA and tracrRNA of type II CRISPR loci if present in the organism. This chain is Ribonuclease 3, found in Bordetella bronchiseptica (strain ATCC BAA-588 / NCTC 13252 / RB50) (Alcaligenes bronchisepticus).